Consider the following 295-residue polypeptide: Light-independent protochlorophyllide reductase iron-sulfur ATP-binding protein (295 aa).

Residues 39 to 44 and Lys-68 each bind ATP; that span reads GIGKST. Residue Ser-43 coordinates Mg(2+). Residues Cys-124 and Cys-158 each contribute to the [4Fe-4S] cluster site. 209–210 contacts ATP; it reads NR.

This sequence belongs to the NifH/BchL/ChlL family. As to quaternary structure, homodimer. Protochlorophyllide reductase is composed of three subunits; ChlL, ChlN and ChlB. [4Fe-4S] cluster is required as a cofactor.

It catalyses the reaction chlorophyllide a + oxidized 2[4Fe-4S]-[ferredoxin] + 2 ADP + 2 phosphate = protochlorophyllide a + reduced 2[4Fe-4S]-[ferredoxin] + 2 ATP + 2 H2O. Its pathway is porphyrin-containing compound metabolism; chlorophyll biosynthesis (light-independent). Component of the dark-operative protochlorophyllide reductase (DPOR) that uses Mg-ATP and reduced ferredoxin to reduce ring D of protochlorophyllide (Pchlide) to form chlorophyllide a (Chlide). This reaction is light-independent. The L component serves as a unique electron donor to the NB-component of the complex, and binds Mg-ATP. The protein is Light-independent protochlorophyllide reductase iron-sulfur ATP-binding protein of Prochlorococcus marinus (strain MIT 9515).